We begin with the raw amino-acid sequence, 661 residues long: Envelope glycoprotein (661 aa).

Residues 1–33 (MEGPAFSKSPKDKTIERAFLGVLGILFVTGGLA) form the signal peptide. Positions 32 to 267 (LASRDNPHQV…KVTDLGPRVP (236 aa)) are receptor-binding domain (RBD). Topologically, residues 34 to 606 (SRDNPHQVYN…FNRSPWFTTL (573 aa)) are extracellular. The N-linked (GlcNAc...) asparagine; by host glycan is linked to asparagine 43. 5 cysteine pairs are disulfide-bonded: cysteine 77-cysteine 129, cysteine 103-cysteine 118, cysteine 104-cysteine 114, cysteine 152-cysteine 172, and cysteine 164-cysteine 177. Position 86 (histidine 86) interacts with Zn(2+). Aspartate 117 contacts Zn(2+). A glycan (N-linked (GlcNAc...) asparagine; by host) is linked at asparagine 199. Cysteine 209 and cysteine 215 are joined by a disulfide. The interval 268 to 308 (IGPNPVLSDQRPPSRPVPARPPPPSASPSTPTIPPQQGTGD) is disordered. The span at 280–301 (PSRPVPARPPPPSASPSTPTIP) shows a compositional bias: pro residues. N-linked (GlcNAc...) asparagine; by host glycosylation is present at asparagine 322. 6 cysteine pairs are disulfide-bonded: cysteine 332–cysteine 335, cysteine 332–cysteine 559, cysteine 362–cysteine 416, cysteine 381–cysteine 393, cysteine 423–cysteine 436, and cysteine 551–cysteine 558. Positions 332–335 (CWLC) match the CXXC motif. An N-linked (GlcNAc...) asparagine; by host glycan is attached at asparagine 361. Residues asparagine 394 and asparagine 430 are each glycosylated (N-linked (GlcNAc...) asparagine; by host). Positions 468–488 (VSLTLALLPEGLTMGGIAAGV) are fusion peptide. A coiled-coil region spans residues 497-533 (ATQQFQQLQAAMHNDLKEVEKSITNLEKSLTSLSEVV). The segment at 534–550 (LQNRRGLDLLFLKEGGL) is immunosuppression. Positions 551–559 (CAALKEECC) match the CX6CC motif. Residues 607 to 627 (ISTIMGPLIVLLLILLFGPCI) traverse the membrane as a helical segment. The S-palmitoyl cysteine; by host moiety is linked to residue cysteine 626. At 628–661 (LNRLVQFVKDRISVVQALVLTQQYHQLKPIEYEP) the chain is on the cytoplasmic side. The short motif at 651 to 654 (YHQL) is the YXXL motif; contains endocytosis signal element.

As to quaternary structure, the mature envelope protein (Env) consists of a trimer of SU-TM heterodimers attached by a labile interchain disulfide bond. Post-translationally, specific enzymatic cleavages in vivo yield mature proteins. Envelope glycoproteins are synthesized as an inactive precursor that is N-glycosylated and processed likely by host cell furin or by a furin-like protease in the Golgi to yield the mature SU and TM proteins. The cleavage site between SU and TM requires the minimal sequence [KR]-X-[KR]-R. The R-peptide is released from the C-terminus of the cytoplasmic tail of the TM protein upon particle formation as a result of proteolytic cleavage by the viral protease. Cleavage of this peptide is required for TM to become fusogenic. The CXXC motif is highly conserved across a broad range of retroviral envelope proteins. It is thought to participate in the formation of a labile disulfide bond possibly with the CX6CC motif present in the transmembrane protein. Isomerization of the intersubunit disulfide bond to an SU intrachain disulfide bond is thought to occur upon receptor recognition in order to allow membrane fusion. In terms of processing, the transmembrane protein is palmitoylated. Post-translationally, the R-peptide is palmitoylated.

The protein localises to the virion membrane. Its subcellular location is the host cell membrane. Functionally, the surface protein (SU) attaches the virus to the host cell by binding to its receptor. This interaction triggers the refolding of the transmembrane protein (TM) and is thought to activate its fusogenic potential by unmasking its fusion peptide. Fusion occurs at the host cell plasma membrane. Its function is as follows. The transmembrane protein (TM) acts as a class I viral fusion protein. Under the current model, the protein has at least 3 conformational states: pre-fusion native state, pre-hairpin intermediate state, and post-fusion hairpin state. During viral and target cell membrane fusion, the coiled coil regions (heptad repeats) assume a trimer-of-hairpins structure, positioning the fusion peptide in close proximity to the C-terminal region of the ectodomain. The formation of this structure appears to drive apposition and subsequent fusion of viral and target cell membranes. Membranes fusion leads to delivery of the nucleocapsid into the cytoplasm. This is Envelope glycoprotein (env) from Mus musculus (Mouse).